Reading from the N-terminus, the 353-residue chain is Guanine nucleotide-binding protein subunit alpha (353 aa).

The tract at residues 1–21 (MGCGMSTEEKEGKARNEEIEN) is disordered. Residue glycine 2 is the site of N-myristoyl glycine attachment. The S-palmitoyl cysteine moiety is linked to residue cysteine 3. Positions 7 to 21 (TEEKEGKARNEEIEN) are enriched in basic and acidic residues. One can recognise a G-alpha domain in the interval 32–353 (NEIKMLLLGA…QENLRLCGLI (322 aa)). The tract at residues 35 to 48 (KMLLLGAGESGKST) is G1 motif. Positions 43, 44, 45, 46, 47, 48, 150, 175, 181, 203, 269, 270, 272, and 325 each coordinate GTP. Serine 47 contacts Mg(2+). Residues 173 to 181 (DVLRSRVKT) are G2 motif. Threonine 181 contributes to the Mg(2+) binding site. Positions 196 to 205 (YRMFDVGGQR) are G3 motif. The segment at 265 to 272 (ILFLNKID) is G4 motif. Positions 323–328 (TCATDT) are G5 motif.

It belongs to the G-alpha family. G(q) subfamily. G proteins are composed of 3 units; alpha, beta and gamma. The alpha chain contains the guanine nucleotide binding site. Mg(2+) is required as a cofactor.

Guanine nucleotide-binding proteins (G proteins) are involved as modulators or transducers in various transmembrane signaling systems. Plays a role in pathogenicity, specifically in appressorium formation in rice blast disease. Also involved in mating. The protein is Guanine nucleotide-binding protein subunit alpha (MAGB) of Pyricularia oryzae (strain 70-15 / ATCC MYA-4617 / FGSC 8958) (Rice blast fungus).